The chain runs to 85 residues: Small ribosomal subunit protein bS16 (85 aa).

It belongs to the bacterial ribosomal protein bS16 family.

This Rubrobacter xylanophilus (strain DSM 9941 / JCM 11954 / NBRC 16129 / PRD-1) protein is Small ribosomal subunit protein bS16.